The chain runs to 142 residues: Nucleoside diphosphate kinase (142 aa).

ATP contacts are provided by K11, F59, R87, T93, R104, and N114. Residue H117 is the Pros-phosphohistidine intermediate of the active site.

It belongs to the NDK family. In terms of assembly, homotetramer. The cofactor is Mg(2+).

It is found in the cytoplasm. The enzyme catalyses a 2'-deoxyribonucleoside 5'-diphosphate + ATP = a 2'-deoxyribonucleoside 5'-triphosphate + ADP. It carries out the reaction a ribonucleoside 5'-diphosphate + ATP = a ribonucleoside 5'-triphosphate + ADP. Functionally, major role in the synthesis of nucleoside triphosphates other than ATP. The ATP gamma phosphate is transferred to the NDP beta phosphate via a ping-pong mechanism, using a phosphorylated active-site intermediate. The sequence is that of Nucleoside diphosphate kinase from Salinibacter ruber (strain DSM 13855 / M31).